We begin with the raw amino-acid sequence, 129 residues long: Ribosome-binding factor A (129 aa).

Belongs to the RbfA family. Monomer. Binds 30S ribosomal subunits, but not 50S ribosomal subunits or 70S ribosomes.

Its subcellular location is the cytoplasm. One of several proteins that assist in the late maturation steps of the functional core of the 30S ribosomal subunit. Associates with free 30S ribosomal subunits (but not with 30S subunits that are part of 70S ribosomes or polysomes). Required for efficient processing of 16S rRNA. May interact with the 5'-terminal helix region of 16S rRNA. The polypeptide is Ribosome-binding factor A (Azotobacter vinelandii (strain DJ / ATCC BAA-1303)).